We begin with the raw amino-acid sequence, 377 residues long: Succinyl-diaminopimelate desuccinylase (377 aa).

Position 71 (His71) interacts with Zn(2+). Asp73 is a catalytic residue. Asp102 contributes to the Zn(2+) binding site. Glu132 acts as the Proton acceptor in catalysis. 3 residues coordinate Zn(2+): Glu133, Glu161, and His346.

It belongs to the peptidase M20A family. DapE subfamily. In terms of assembly, homodimer. Zn(2+) serves as cofactor. Requires Co(2+) as cofactor.

It carries out the reaction N-succinyl-(2S,6S)-2,6-diaminopimelate + H2O = (2S,6S)-2,6-diaminopimelate + succinate. Its pathway is amino-acid biosynthesis; L-lysine biosynthesis via DAP pathway; LL-2,6-diaminopimelate from (S)-tetrahydrodipicolinate (succinylase route): step 3/3. In terms of biological role, catalyzes the hydrolysis of N-succinyl-L,L-diaminopimelic acid (SDAP), forming succinate and LL-2,6-diaminopimelate (DAP), an intermediate involved in the bacterial biosynthesis of lysine and meso-diaminopimelic acid, an essential component of bacterial cell walls. The protein is Succinyl-diaminopimelate desuccinylase of Rhizorhabdus wittichii (strain DSM 6014 / CCUG 31198 / JCM 15750 / NBRC 105917 / EY 4224 / RW1) (Sphingomonas wittichii).